Here is a 450-residue protein sequence, read N- to C-terminus: Tubulin alpha-3C chain (450 aa).

The MREC motif signature appears at methionine 1–cysteine 4. Glutamine 11 is a binding site for GTP. N6-acetyllysine is present on lysine 40. Glutamate 71, serine 140, glycine 144, threonine 145, threonine 179, asparagine 206, and asparagine 228 together coordinate GTP. Glutamate 71 is a binding site for Mg(2+). Glutamate 254 is a catalytic residue. Tyrosine 282 is modified (3'-nitrotyrosine). Serine 439 carries the post-translational modification Phosphoserine. Tyrosine 450 bears the 3'-nitrotyrosine mark.

It belongs to the tubulin family. Dimer of alpha and beta chains. A typical microtubule is a hollow water-filled tube with an outer diameter of 25 nm and an inner diameter of 15 nM. Alpha-beta heterodimers associate head-to-tail to form protofilaments running lengthwise along the microtubule wall with the beta-tubulin subunit facing the microtubule plus end conferring a structural polarity. Microtubules usually have 13 protofilaments but different protofilament numbers can be found in some organisms and specialized cells. Mg(2+) serves as cofactor. Some glutamate residues at the C-terminus are polyglutamylated, resulting in polyglutamate chains on the gamma-carboxyl group. Polyglutamylation plays a key role in microtubule severing by spastin (SPAST). SPAST preferentially recognizes and acts on microtubules decorated with short polyglutamate tails: severing activity by SPAST increases as the number of glutamates per tubulin rises from one to eight, but decreases beyond this glutamylation threshold. Glutamylation is also involved in cilia motility. In terms of processing, some glutamate residues at the C-terminus are monoglycylated but not polyglycylated due to the absence of functional TTLL10 in human. Monoglycylation is mainly limited to tubulin incorporated into cilia and flagella axonemes, which is required for their stability and maintenance. Flagella glycylation controls sperm motility. Both polyglutamylation and monoglycylation can coexist on the same protein on adjacent residues, and lowering glycylation levels increases polyglutamylation, and reciprocally. Post-translationally, acetylation of alpha chains at Lys-40 is located inside the microtubule lumen. This modification has been correlated with increased microtubule stability, intracellular transport and ciliary assembly. Methylation of alpha chains at Lys-40 is found in mitotic microtubules and is required for normal mitosis and cytokinesis contributing to genomic stability. In terms of processing, nitration of Tyr-450 is irreversible and interferes with normal dynein intracellular distribution. Post-translationally, undergoes a tyrosination/detyrosination cycle, the cyclic removal and re-addition of a C-terminal tyrosine residue by the enzymes tubulin tyrosine carboxypeptidase (MATCAP1/KIAA0895L, VASH1 or VASH2) and tubulin tyrosine ligase (TTL), respectively. Tyrosination promotes microtubule interaction with CAP-Gly domain-containing proteins such as CLIP1, CLIP2 and DCTN1. Tyrosination regulates the initiation of dynein-dynactin motility via interaction with DCTN1, which brings the dynein-dynactin complex into contact with microtubules. In neurons, tyrosinated tubulins mediate the initiation of retrograde vesicle transport. In terms of processing, detyrosination is involved in metaphase plate congression by guiding chromosomes during mitosis: detyrosination promotes interaction with CENPE, promoting pole-proximal transport of chromosomes toward the equator. Detyrosination increases microtubules-dependent mechanotransduction in dystrophic cardiac and skeletal muscle. In cardiomyocytes, detyrosinated microtubules are required to resist to contractile compression during contraction: detyrosination promotes association with desmin (DES) at force-generating sarcomeres, leading to buckled microtubules and mechanical resistance to contraction. In terms of tissue distribution, expressed in testis.

The protein localises to the cytoplasm. It localises to the cytoskeleton. The enzyme catalyses GTP + H2O = GDP + phosphate + H(+). In terms of biological role, tubulin is the major constituent of microtubules, a cylinder consisting of laterally associated linear protofilaments composed of alpha- and beta-tubulin heterodimers. Microtubules grow by the addition of GTP-tubulin dimers to the microtubule end, where a stabilizing cap forms. Below the cap, tubulin dimers are in GDP-bound state, owing to GTPase activity of alpha-tubulin. The chain is Tubulin alpha-3C chain (TUBA3C) from Homo sapiens (Human).